We begin with the raw amino-acid sequence, 158 residues long: Cyclic pyranopterin monophosphate synthase (158 aa).

Substrate is bound by residues 75 to 77 (LCH) and 113 to 114 (ME). Asp-128 is an active-site residue.

Belongs to the MoaC family. In terms of assembly, homohexamer; trimer of dimers.

It carries out the reaction (8S)-3',8-cyclo-7,8-dihydroguanosine 5'-triphosphate = cyclic pyranopterin phosphate + diphosphate. It functions in the pathway cofactor biosynthesis; molybdopterin biosynthesis. Functionally, catalyzes the conversion of (8S)-3',8-cyclo-7,8-dihydroguanosine 5'-triphosphate to cyclic pyranopterin monophosphate (cPMP). The polypeptide is Cyclic pyranopterin monophosphate synthase (Ralstonia nicotianae (strain ATCC BAA-1114 / GMI1000) (Ralstonia solanacearum)).